Here is a 176-residue protein sequence, read N- to C-terminus: Woronin body major protein (176 aa).

Positions 1–16 (MGYYDDDAHGHVEADA) are excised as a propeptide. Residues 1–16 (MGYYDDDAHGHVEADA) show a composition bias toward basic and acidic residues. The segment at 1–31 (MGYYDDDAHGHVEADAAPRATTGTGTGSASQ) is disordered. Positions 174-176 (SRL) match the Microbody targeting signal motif.

Belongs to the eIF-5A family. Hex1 subfamily. In terms of assembly, forms oligomers. Self-assembles into hexagonal rods.

It is found in the cell septum. In terms of biological role, major component of Woronin bodies, fungal-specific organelles that occlude septal pores in order to separate intact from damaged compartments. Hex-1 binds directly or indirectly to the Woronin body tether that in turn is anchored at the rim of the septal pore. The polypeptide is Woronin body major protein (Neurospora crassa (strain ATCC 24698 / 74-OR23-1A / CBS 708.71 / DSM 1257 / FGSC 987)).